The primary structure comprises 543 residues: Zinc finger CCCH-type with G patch domain-containing protein (543 aa).

Disordered stretches follow at residues 55–79 (AATSDDDDAPDTAGRAPPATADNPI) and 95–132 (TEDSAAGEQAGEQTATEPERQPNDDDADNDDDADDKLD). Residues 65-76 (DTAGRAPPATAD) are compositionally biased toward low complexity. Residues 118–131 (DDDADNDDDADDKL) show a composition bias toward acidic residues. The C3H1-type zinc finger occupies 186–209 (PCAYFLEGECRFTDEKCRYSHGEV). The tract at residues 272 to 304 (PFEDLLPLDEDEDGQEAAEDSESDTDGADEEEA) is disordered. Over residues 277–304 (LPLDEDEDGQEAAEDSESDTDGADEEEA) the composition is skewed to acidic residues. One can recognise a G-patch domain in the interval 335–381 (TRGIGSKIMQKMGYIVGTGLGREGEGIVVPVSAQVLPQGRSLDYCME). The disordered stretch occupies residues 438–460 (GAAGGESSRPNRNRPGALSRQEL).

The protein resides in the nucleus. Its function is as follows. Transcription repressor. This Anopheles gambiae (African malaria mosquito) protein is Zinc finger CCCH-type with G patch domain-containing protein.